The sequence spans 492 residues: MMSASFKCPVSLSGVENICNGDKAIPGINSRTLFTGSSFLQRHHSANKIFFRTCGKKGSCCLFNIRAMAETDSGNGVPQLDISLSPRVAALKPSKTMAITDLATALKQAGVPVIGLAAGEPDFNTPDAVAEAGIKAIQDGYTRYTPNAGTMEIRTAICHKLKEENGLSYTPDQILVSNGAKQCIMAAAVLAVCSPGDEVIIPAPFWVSYTEMARLADATPVIIPTLLSDDFLLNPEVFSSKLNENSRLLILCSPSNPTGSVYPRELLEEIAKIVAKHPKLLVLSDEIYEHIMYPPAKHTSFASLPGMWERTLTVNGFSKAFAMTGWRLGYLAGPKHFVTACGRIQSQSTSGASSISQKAGVAALALGYAGSEAVSTMVKAYRERRDFLVQRLQAMEGVKLPVPQGAFYLFPDFSSYYGTEVEDFGVINGSEALCRFFLEKAQVALVPGDAFGNDDCIRISYAASLDTLRTAINNIEKSLLLLRPAAAASKAS.

A chloroplast-targeting transit peptide spans 1–66 (MMSASFKCPV…KGSCCLFNIR (66 aa)). L-aspartate is bound by residues G119, W206, and N256. Residue K319 is modified to N6-(pyridoxal phosphate)lysine. L-aspartate is bound at residue R458.

Belongs to the class-I pyridoxal-phosphate-dependent aminotransferase family. In terms of assembly, homodimer. Pyridoxal 5'-phosphate is required as a cofactor.

It localises to the plastid. The protein localises to the chloroplast. It catalyses the reaction L-aspartate + 2-oxoglutarate = oxaloacetate + L-glutamate. Functionally, prokaryotic-type aspartate aminotransferase. Specific for aspartate and no activity with glutamine, asparagine, alanine, histidine, leucine, methionine, lysine, arginine, tryptophan, tyrosine, phenylalanine or kynurenine. This Pinus pinaster (Maritime pine) protein is Aspartate aminotransferase (AAT).